The primary structure comprises 105 residues: Large ribosomal subunit protein eL30 (105 aa).

Belongs to the eukaryotic ribosomal protein eL30 family.

The sequence is that of Large ribosomal subunit protein eL30 (RPL30) from Candida glabrata (strain ATCC 2001 / BCRC 20586 / JCM 3761 / NBRC 0622 / NRRL Y-65 / CBS 138) (Yeast).